Here is a 184-residue protein sequence, read N- to C-terminus: UPF0301 protein Sden_2674 (184 aa).

It belongs to the UPF0301 (AlgH) family.

This is UPF0301 protein Sden_2674 from Shewanella denitrificans (strain OS217 / ATCC BAA-1090 / DSM 15013).